Reading from the N-terminus, the 789-residue chain is Ataxin-1 (789 aa).

The segment covering 1–30 (MKSNQERSNECLPPKKREIPATSRPSEEKA) has biased composition (basic and acidic residues). The disordered stretch occupies residues 1 to 73 (MKSNQERSNE…GTSGEHGLQG (73 aa)). Lys-16 is covalently cross-linked (Glycyl lysine isopeptide (Lys-Gly) (interchain with G-Cter in SUMO)). Ser-81 and Ser-87 each carry phosphoserine. Disordered stretches follow at residues 188-237 (QAPG…RATS) and 296-397 (EVLN…KPGH). Lys-193 participates in a covalent cross-link: Glycyl lysine isopeptide (Lys-Gly) (interchain with G-Cter in SUMO). A Phosphoserine modification is found at Ser-213. At Thr-217 the chain carries Phosphothreonine. 3 stretches are compositionally biased toward polar residues: residues 218 to 235 (QQNQYIHISSSPQSSGRA), 310 to 325 (ASSSVELSLGKTSSKS), and 360 to 386 (PNSSTPSADLETQQATHREASPSTLND). Ser-228 is modified (phosphoserine). The tract at residues 468-578 (VGSPDMDTPG…TEDFIQSAEI (111 aa)) is self-association. The tract at residues 512–789 (LVTQAAYPAM…CIEGRSNVGK (278 aa)) is interaction with USP7. An RNA-binding region spans residues 514 to 740 (TQAAYPAMVQ…FLTKIEPSKP (227 aa)). Residues 536 to 667 (SPAAASPTLP…SLTLKNLKNG (132 aa)) enclose the AXH domain. Residues Lys-583, Lys-670, and Lys-719 each participate in a glycyl lysine isopeptide (Lys-Gly) (interchain with G-Cter in SUMO) cross-link. Residues 736 to 772 (EPSKPTATRKRRWSAPETRKLEKSEDEPPLTLPKPSL) are disordered. Ser-749 is modified (phosphoserine). A Nuclear localization signal motif is present at residues 768–771 (PKPS).

Belongs to the ATXN1 family. Homooligomer. Interacts with CIC. Interacts with ANP32A, PQBP1, UBQLN4, ATXN1L and USP7. Directly interacts with RBPJ; this interaction is disrupted in the presence of Notch intracellular domain. Competes with ATXN1L for RBPJ-binding. Found in a complex with CIC and ATXN1L. In terms of processing, ubiquitinated by UBE3A, leading to its degradation by the proteasome. Phosphorylation at Ser-749 increases the pathogenicity of proteins with an expanded polyglutamine tract. Post-translationally, sumoylation is dependent on nuclear localization and phosphorylation at Ser-749. It is reduced in the presence of an expanded polyglutamine tract.

Its subcellular location is the cytoplasm. The protein localises to the nucleus. Chromatin-binding factor that repress Notch signaling in the absence of Notch intracellular domain by acting as a CBF1 corepressor. Binds to the HEY promoter and might assist, along with NCOR2, RBPJ-mediated repression. Binds RNA in vitro. May be involved in RNA metabolism. In concert with CIC and ATXN1L, involved brain development. The polypeptide is Ataxin-1 (Atxn1) (Rattus norvegicus (Rat)).